Reading from the N-terminus, the 454-residue chain is Tol-Pal system protein TolB (454 aa).

The signal sequence occupies residues 1-30 (MNDARSITRRRFMTLTGSGLAMLGGGHAFA).

Belongs to the TolB family. In terms of assembly, the Tol-Pal system is composed of five core proteins: the inner membrane proteins TolA, TolQ and TolR, the periplasmic protein TolB and the outer membrane protein Pal. They form a network linking the inner and outer membranes and the peptidoglycan layer.

The protein localises to the periplasm. In terms of biological role, part of the Tol-Pal system, which plays a role in outer membrane invagination during cell division and is important for maintaining outer membrane integrity. The polypeptide is Tol-Pal system protein TolB (Bradyrhizobium diazoefficiens (strain JCM 10833 / BCRC 13528 / IAM 13628 / NBRC 14792 / USDA 110)).